A 484-amino-acid polypeptide reads, in one-letter code: Putative sodium/proton-dependent alanine carrier protein YrbD (484 aa).

The next 11 helical transmembrane spans lie at 11 to 31 (VLWS…FSIM), 66 to 88 (ALSG…FGGP), 92 to 114 (FWMW…LAQI), 139 to 159 (WFAV…MPGV), 172 to 192 (FGIS…FIIF), 205 to 225 (IVPF…VMNV), 238 to 258 (SAFA…SWGV), 292 to 312 (AFSV…MILF), 350 to 370 (GFGA…TIMA), 390 to 410 (WAML…TVKT), and 416 to 436 (ALGD…IVLL).

This sequence belongs to the alanine or glycine:cation symporter (AGCS) (TC 2.A.25) family.

It localises to the cell membrane. In Bacillus subtilis (strain 168), this protein is Putative sodium/proton-dependent alanine carrier protein YrbD (yrbD).